The primary structure comprises 267 residues: 3-methyl-2-oxobutanoate hydroxymethyltransferase (267 aa).

Positions 45 and 84 each coordinate Mg(2+). 3-methyl-2-oxobutanoate contacts are provided by residues 45 to 46, Asp84, and Lys113; that span reads DS. Residue Glu115 participates in Mg(2+) binding. Glu182 functions as the Proton acceptor in the catalytic mechanism.

This sequence belongs to the PanB family. As to quaternary structure, homodecamer; pentamer of dimers. Requires Mg(2+) as cofactor.

The protein localises to the cytoplasm. The enzyme catalyses 3-methyl-2-oxobutanoate + (6R)-5,10-methylene-5,6,7,8-tetrahydrofolate + H2O = 2-dehydropantoate + (6S)-5,6,7,8-tetrahydrofolate. Its pathway is cofactor biosynthesis; coenzyme A biosynthesis. Functionally, catalyzes the reversible reaction in which hydroxymethyl group from 5,10-methylenetetrahydrofolate is transferred onto alpha-ketoisovalerate to form ketopantoate. The protein is 3-methyl-2-oxobutanoate hydroxymethyltransferase of Saccharolobus solfataricus (strain ATCC 35092 / DSM 1617 / JCM 11322 / P2) (Sulfolobus solfataricus).